We begin with the raw amino-acid sequence, 687 residues long: Dictomallein (687 aa).

2 disordered regions span residues 1-45 and 73-112; these read MGNG…SRRL and TAGGAAPLTPAVASPAGPTGSTPGSTPGATTAPAPSSTSA. One can recognise a Peptidase M66 domain in the interval 233–501; it reads PVFGTDADVQ…QAWIASRVLA (269 aa). H393 is a Zn(2+) binding site. Residue E394 is part of the active site. Zn(2+) contacts are provided by H397 and H403.

It belongs to the dictomallein family. Requires Zn(2+) as cofactor.

The sequence is that of Dictomallein (dtmL) from Burkholderia pseudomallei (strain 668).